Consider the following 102-residue polypeptide: Large ribosomal subunit protein bL21 (102 aa).

Belongs to the bacterial ribosomal protein bL21 family. In terms of assembly, part of the 50S ribosomal subunit. Contacts protein L20.

This protein binds to 23S rRNA in the presence of protein L20. This Nitratidesulfovibrio vulgaris (strain ATCC 29579 / DSM 644 / CCUG 34227 / NCIMB 8303 / VKM B-1760 / Hildenborough) (Desulfovibrio vulgaris) protein is Large ribosomal subunit protein bL21.